We begin with the raw amino-acid sequence, 91 residues long: Acylphosphatase (91 aa).

In terms of domain architecture, Acylphosphatase-like spans Arg5–Arg91. Catalysis depends on residues Arg20 and Asn38.

The protein belongs to the acylphosphatase family.

It carries out the reaction an acyl phosphate + H2O = a carboxylate + phosphate + H(+). This Thermobifida fusca (strain YX) protein is Acylphosphatase (acyP).